The chain runs to 489 residues: UDP-N-acetylmuramate--L-alanine ligase (489 aa).

128–134 contributes to the ATP binding site; that stretch reads GTHGKTT.

It belongs to the MurCDEF family.

The protein resides in the cytoplasm. The catalysed reaction is UDP-N-acetyl-alpha-D-muramate + L-alanine + ATP = UDP-N-acetyl-alpha-D-muramoyl-L-alanine + ADP + phosphate + H(+). It participates in cell wall biogenesis; peptidoglycan biosynthesis. In terms of biological role, cell wall formation. In Shewanella pealeana (strain ATCC 700345 / ANG-SQ1), this protein is UDP-N-acetylmuramate--L-alanine ligase.